The sequence spans 226 residues: Cytidylate kinase (226 aa).

An ATP-binding site is contributed by 11–19; the sequence is GPASAGKST.

Belongs to the cytidylate kinase family. Type 1 subfamily.

It localises to the cytoplasm. It catalyses the reaction CMP + ATP = CDP + ADP. The catalysed reaction is dCMP + ATP = dCDP + ADP. This Pediococcus pentosaceus (strain ATCC 25745 / CCUG 21536 / LMG 10740 / 183-1w) protein is Cytidylate kinase.